The primary structure comprises 153 residues: MSLDLALDVQYATASDYLPSEEQFALWVKTAIGNSMEQAELTIRIVDSRESQMLNSTYRGKDKPTNVLSFPFEAPPEIELPLLGDLVICATVVENEAREQDKTLEAHWAHMVVHGCLHLLGYDHIEDEEAEEMESLETQLIESLGFTDPYKEQ.

Residues histidine 114, histidine 118, and histidine 124 each coordinate Zn(2+).

Belongs to the endoribonuclease YbeY family. Requires Zn(2+) as cofactor.

Its subcellular location is the cytoplasm. Functionally, single strand-specific metallo-endoribonuclease involved in late-stage 70S ribosome quality control and in maturation of the 3' terminus of the 16S rRNA. The chain is Endoribonuclease YbeY from Shewanella sp. (strain MR-4).